The following is a 344-amino-acid chain: MPKYPLLGMTLTELQSVTKDLGMPAFAAKQIASWLYDKKVTSIDEMTNLSLKHRELLKGEYDLGISAPVDEMRSVDGTVKYLYQVSDNHFVEAVYIPDEDRATLCVSSQVGCKMNCKFCMTGKQGFTASLTANQILNQIAALPERDKLTNVVMMGMGEPLDNLDEVLKALHILTASYGYGWSPKRITLSSVGLRKGLQRFIEESECHLAISLHSPFPSQRSELMPAERAFSIKEMVDLLKNYDFSKQRRLSFEYIVFKGVNDSLIYAKELLKLLRGLDCRVNLIRFHAIPGVDLEGAGMETMTSFRDYLTSHGLFTTIRASRGEDIFAACGMLSTAKQEESNKN.

E92 serves as the catalytic Proton acceptor. One can recognise a Radical SAM core domain in the interval 98–325; that stretch reads DEDRATLCVS…TTIRASRGED (228 aa). The cysteines at positions 105 and 330 are disulfide-linked. Positions 112, 116, and 119 each coordinate [4Fe-4S] cluster. S-adenosyl-L-methionine is bound by residues 157–158, S189, 211–213, and H287; these read GE and SLH. The S-methylcysteine intermediate role is filled by C330.

The protein belongs to the radical SAM superfamily. RlmN family. The cofactor is [4Fe-4S] cluster.

It is found in the cytoplasm. The catalysed reaction is adenosine(2503) in 23S rRNA + 2 reduced [2Fe-2S]-[ferredoxin] + 2 S-adenosyl-L-methionine = 2-methyladenosine(2503) in 23S rRNA + 5'-deoxyadenosine + L-methionine + 2 oxidized [2Fe-2S]-[ferredoxin] + S-adenosyl-L-homocysteine. The enzyme catalyses adenosine(37) in tRNA + 2 reduced [2Fe-2S]-[ferredoxin] + 2 S-adenosyl-L-methionine = 2-methyladenosine(37) in tRNA + 5'-deoxyadenosine + L-methionine + 2 oxidized [2Fe-2S]-[ferredoxin] + S-adenosyl-L-homocysteine. Its function is as follows. Specifically methylates position 2 of adenine 2503 in 23S rRNA and position 2 of adenine 37 in tRNAs. The sequence is that of Probable dual-specificity RNA methyltransferase RlmN from Bacteroides fragilis (strain ATCC 25285 / DSM 2151 / CCUG 4856 / JCM 11019 / LMG 10263 / NCTC 9343 / Onslow / VPI 2553 / EN-2).